We begin with the raw amino-acid sequence, 179 residues long: MTLDATLAADIDAVCRLTGQFTLRSGQQATEYFDKYLFEADPQLLLRVAREMVGLLPDGTDLLGGLELGGVPIATMVSSLTGRPALYVRKKAKEYGTCKLAEGPDVAGRRVTLIEDVITTGGAVRDATRALRAAGAEVDVVVCAIDRSPAGEHPLADVGLEVRPVLTKAELDAAREAGA.

Residues Arg24, Arg89, Lys90, Lys93, and 115-123 (EDVITTGGA) each bind 5-phospho-alpha-D-ribose 1-diphosphate. The orotate site is built by Thr119 and Arg147.

The protein belongs to the purine/pyrimidine phosphoribosyltransferase family. PyrE subfamily. As to quaternary structure, homodimer. Mg(2+) serves as cofactor.

The catalysed reaction is orotidine 5'-phosphate + diphosphate = orotate + 5-phospho-alpha-D-ribose 1-diphosphate. Its pathway is pyrimidine metabolism; UMP biosynthesis via de novo pathway; UMP from orotate: step 1/2. Functionally, catalyzes the transfer of a ribosyl phosphate group from 5-phosphoribose 1-diphosphate to orotate, leading to the formation of orotidine monophosphate (OMP). The protein is Orotate phosphoribosyltransferase of Nocardioides sp. (strain ATCC BAA-499 / JS614).